Consider the following 423-residue polypeptide: AP-1 complex subunit mu-2 (423 aa).

An MHD domain is found at 168 to 421 (KNEVFIDVIE…ITQSGDYQLR (254 aa)).

The protein belongs to the adaptor complexes medium subunit family. Adaptor protein complex 1 (AP-1) is a heterotetramer composed of two large adaptins (gamma-type subunit AP1G1 and beta-type subunit AP1B1), a medium adaptin (mu-type subunit AP1M1 or AP1M2) and a small adaptin (sigma-type subunit AP1S1 or AP1S2 or AP1S3). Interacts with P2X4. In terms of processing, phosphorylation of membrane-bound AP1M1/AP1M2 increases its affinity for sorting signals.

It localises to the golgi apparatus. The protein resides in the cytoplasmic vesicle. It is found in the clathrin-coated vesicle membrane. Its function is as follows. Subunit of clathrin-associated adaptor protein complex 1 that plays a role in protein sorting in the trans-Golgi network (TGN) and endosomes. The AP complexes mediate the recruitment of clathrin to membranes and the recognition of sorting signals within the cytosolic tails of transmembrane cargo molecules. The sequence is that of AP-1 complex subunit mu-2 (Ap1m2) from Mus musculus (Mouse).